The following is an 804-amino-acid chain: Leucine--tRNA ligase (804 aa).

The 'HIGH' region motif lies at 39–50 (PYPSGAGLHVGH). A 'KMSKS' region motif is present at residues 580-584 (KMSKS). Lys-583 contributes to the ATP binding site.

Belongs to the class-I aminoacyl-tRNA synthetase family.

It is found in the cytoplasm. It carries out the reaction tRNA(Leu) + L-leucine + ATP = L-leucyl-tRNA(Leu) + AMP + diphosphate. The chain is Leucine--tRNA ligase from Mycoplasma mycoides subsp. mycoides SC (strain CCUG 32753 / NCTC 10114 / PG1).